A 144-amino-acid chain; its full sequence is Transcriptional regulator SlyA (144 aa).

In terms of domain architecture, HTH marR-type spans 2 to 135 (ESPLGSDLAR…LIKLVAKLEH (134 aa)). The H-T-H motif DNA-binding region spans 49 to 72 (QIQLAKAIGIEQPSLVRTLDQLED).

This sequence belongs to the SlyA family. As to quaternary structure, homodimer.

Transcription regulator that can specifically activate or repress expression of target genes. Required to activate expression of virulent genes. The polypeptide is Transcriptional regulator SlyA (Salmonella choleraesuis (strain SC-B67)).